Reading from the N-terminus, the 1099-residue chain is MEILYTEITQDLTEGLLEISLEELEKNRKVYYIVPSSMSFEKEKEILERLAKGSDSAVFDLLVTRFKQLPYYFDKREKATTKTELGTAGLSMLFRRVLRSFSKEEIPLYFSLQDSAGFLEMLIQLRTELLTANLSVENLPDSPKNQELKKILSRFEEKLANDYANYSEFGDFTSRLADGEFDFQLKDVTIVIDGYTRFSAEEELFIESIQDRVARFVIGTYSDENSLTAGSETIYISTSQMIGRFRSKFPVELRKMAFSSVNEVYNKLTKLLDLDSRFAISDQNIEINSADAKYFRIWEAENQKVEIEGVAKEIRQKISQGAFFKDFTVLVGDPAAYEITLKEIFELYEIPFFYAQEESMSQHPLVIFFESLLSIKKNNYGTDDVVNLLKSKVYTDVNLDEEVIDYFEYYVQKYKISGRKKFTEAFNESEFSKIELVNQLRENLLGNDSPLQVFLGTNRQKTGKKWVSDLQVLLENGNVMANMNTYFSEAESENKHQMADKHEQVWQMLISILNEFLAVFSDEKLKSVEFLDILLAGLKNAKYRQIPANVDVVNIKDYELVEPKTNKYIYAIGLSQTNFPRIKKNSTLLSDEERLEINQTTDENQFIEQLNVVNYQKNQFTVLSLVNSAKETLVLSMPQIMANEQGEFSPVFQLFLNHSDEKILQKIQEVNLFESLEHIGNSRSVISMIGKIERELVETEEKNDDKRVFWSSIFRILVKSNPDFQKILLDLAKDIDTVNLSQETLDQIYGDKLYASVSSFERFYNCEYQYFLETTLGLETFENIDINSKIVGNFFHEVFEKVMQEEALSAENFDEKLTKVLHDVDSNYSRYFTHDATARFTWTNLEEIVRQTATVLKETVSTDELKTLLTESSFGLPKSELGNFSVDDIYLRGRIDRLDQLSSDYLGAIDYKSSAHSFKLQDAYDGLSLQFMTYLDVIKEAFPNQKIWGALYLQFKNQPINLSEINHLSEIAGLLKESMRYDGLVLEEAADQIKAIENITVKKSNIYNQEEFEQLLKLNENHYQHAGQRLKSGQIAINPIMKRSEGIDQTGNVRGCRYCPLKSICRFEANVHMNDHSREIGQKSQAEILAELKGEGRNE.

Cysteine 766, cysteine 1056, cysteine 1059, and cysteine 1065 together coordinate [4Fe-4S] cluster.

This sequence belongs to the helicase family. AddB/RexB type 2 subfamily. Heterodimer of AddA and RexB. Requires Mg(2+) as cofactor. The cofactor is [4Fe-4S] cluster.

Its function is as follows. The heterodimer acts as both an ATP-dependent DNA helicase and an ATP-dependent, dual-direction single-stranded exonuclease. Recognizes the chi site generating a DNA molecule suitable for the initiation of homologous recombination. This subunit has 5' -&gt; 3' nuclease activity but not helicase activity. This chain is ATP-dependent helicase/deoxyribonuclease subunit B, found in Lactococcus lactis subsp. lactis (strain IL1403) (Streptococcus lactis).